The following is a 122-amino-acid chain: Large ribosomal subunit protein uL14c (122 aa).

This sequence belongs to the universal ribosomal protein uL14 family. Part of the 50S ribosomal subunit.

Its subcellular location is the plastid. It is found in the chloroplast. Functionally, binds to 23S rRNA. The polypeptide is Large ribosomal subunit protein uL14c (rpl14) (Bigelowiella natans (Pedinomonas minutissima)).